The chain runs to 4592 residues: Intermembrane lipid transfer protein vps13D (4592 aa).

The region spanning 3–102 is the Chorein N-terminal domain; that stretch reads FESVVAEVID…SSTNVSSNYS (100 aa). Disordered regions lie at residues 95–142, 157–199, 286–307, 445–529, 574–605, 826–861, 1040–1083, 1219–1249, 1655–1717, 1855–1886, 1971–2001, 2025–2056, and 2245–2270; these read TNVS…TASQ, LDKK…IDSQ, STTSSNNNNNNNNNNTTSSSSS, KKDD…IKGI, SNSTTTNNSNNNSSSSPNILATSPSNNSLSPM, NYNNQSSSSSSSSQPPPPKPTEETSTTNKPKKQQGI, TTSP…KRQW, YFKNKRKEENEQNEGNTEDDEQEEEEQEKKP, QQQE…QQSN, SNNNNDNNNDNNNSNNSNNNNNTSNGSGNSLF, TSSLDNTSISTTTTTTTTTTTTTTTTTTTTS, PLINDNSNKSPTSKSSSSKSSSSKSSKKEQQQ, and NNNNNNNNNNNNNNNNNNNNNTNIIN. 2 stretches are compositionally biased toward low complexity: residues 117-139 and 172-199; these read SSSNNNNNNNNDSSSSSSNTTST and KSTNTTTNNNGINNSNDKNKNNNNIDSQ. Residues 437–517 are a coiled coil; the sequence is KNATIKLNKK…KKKEEKGKSK (81 aa). A compositionally biased stretch (basic and acidic residues) spans 445-457; sequence KKDDKKDDKKDDI. A compositionally biased stretch (low complexity) spans 458–474; it reads NSSSSSIGSSNSSNNTP. Residues 475 to 529 show a composition bias toward basic and acidic residues; the sequence is TKDKNKEKEKDKEKEKEKEKKKEKEKLKLEEKKKKKEEKGKSKSKDSKKNKIKGI. The segment covering 574–591 has biased composition (low complexity); that stretch reads SNSTTTNNSNNNSSSSPN. The span at 592–603 shows a compositional bias: polar residues; that stretch reads ILATSPSNNSLS. Residues 829–838 are compositionally biased toward low complexity; that stretch reads NQSSSSSSSS. Polar residues predominate over residues 1040 to 1059; that stretch reads TTSPTFNSLNNKPSTLQNNH. Low complexity predominate over residues 1064 to 1076; the sequence is NGNSSNNNNTDSP. Over residues 1234–1244 the composition is skewed to acidic residues; that stretch reads NTEDDEQEEEE. Composition is skewed to low complexity over residues 1669–1689 and 1702–1715; these read KSINSKPPSPKLSLMSPLRKS and QQQQQQQQQQQQQQ. Low complexity predominate over residues 2037-2048; that stretch reads SKSSSSKSSSSK. A TPR 1 repeat occupies 2321–2354; that stretch reads TLQINDLGANIISIGNKSTSIKCFLRSIRLSDSR. 7 disordered regions span residues 2456 to 2489, 2862 to 2882, 3006 to 3035, 3106 to 3129, 3356 to 3384, 3560 to 3580, and 3630 to 3679; these read KTNNNNNNNNNNYNNTNSNNNNNQEEEEKDSIST, AVSTSNNPNGSGYNNSNNNNG, GEQKGKKKSTSTSTSPTLSSQPSSSSSSSS, NSSGYNSSSPSPSSSSSPSSSSSN, KLPTSPQTSSSSSPPPATTTTSTTTKRTT, NSLKIEQGRKSKKQQQQHRHN, and STNH…SKLK. Low complexity-rich tracts occupy residues 2458-2478, 2864-2880, and 3015-3035; these read NNNNNNNNNNYNNTNSNNNNN, STSNNPNGSGYNNSNNN, and TSTSTSPTLSSQPSSSSSSSS. Over residues 3358 to 3384 the composition is skewed to low complexity; that stretch reads PTSPQTSSSSSPPPATTTTSTTTKRTT. Residues 3569–3580 show a composition bias toward basic residues; the sequence is KSKKQQQQHRHN. Positions 3640-3679 are enriched in low complexity; that stretch reads SSTFNNSSNDNINNGNSNNNTSNSLSPPSSSSSINLSKLK. A TPR 2 repeat occupies 3789-3822; that stretch reads EVPKPYLGRVDIKDNDTHTSIHFYDQDTEYSPFR. 2 stretches are compositionally biased toward low complexity: residues 3872 to 3894 and 4111 to 4135; these read TTTTTTTTNSTNDINNDNNNNNN and QQLQQNPQQQQPQQQNNEIQNNPIN. 2 disordered regions span residues 3872–3897 and 4105–4135; these read TTTTTTTTNSTNDINNDNNNNNNQYI and KKHKKNQQLQQNPQQQQPQQQNNEIQNNPIN.

It is found in the membrane. In terms of biological role, mediates the transfer of lipids between membranes at organelle contact sites. The sequence is that of Intermembrane lipid transfer protein vps13D (vps13D) from Dictyostelium discoideum (Social amoeba).